Reading from the N-terminus, the 74-residue chain is Translation initiation factor IF-1 (74 aa).

The region spanning 1–72 is the S1-like domain; it reads MADTEKLKML…TRGRITYRHR (72 aa).

The protein belongs to the IF-1 family. As to quaternary structure, component of the 30S ribosomal translation pre-initiation complex which assembles on the 30S ribosome in the order IF-2 and IF-3, IF-1 and N-formylmethionyl-tRNA(fMet); mRNA recruitment can occur at any time during PIC assembly.

Its subcellular location is the cytoplasm. Functionally, one of the essential components for the initiation of protein synthesis. Stabilizes the binding of IF-2 and IF-3 on the 30S subunit to which N-formylmethionyl-tRNA(fMet) subsequently binds. Helps modulate mRNA selection, yielding the 30S pre-initiation complex (PIC). Upon addition of the 50S ribosomal subunit IF-1, IF-2 and IF-3 are released leaving the mature 70S translation initiation complex. This is Translation initiation factor IF-1 from Ureaplasma parvum serovar 3 (strain ATCC 700970).